The following is a 305-amino-acid chain: Hydrogen peroxide-inducible genes activator (305 aa).

The region spanning methionine 1–threonine 58 is the HTH lysR-type domain. Positions phenylalanine 18–arginine 37 form a DNA-binding region, H-T-H motif. Intrachain disulfides connect cysteine 180–cysteine 259 and cysteine 199–cysteine 208. Position 199 is a cysteine sulfenic acid (-SOH); alternate (cysteine 199). Cysteine 199 bears the S-glutathionyl cysteine; alternate mark. Position 199 is an S-nitrosocysteine; alternate (cysteine 199).

It belongs to the LysR transcriptional regulatory family. As to quaternary structure, homodimer and homotetramer. In terms of processing, oxidized on Cys-199; the Cys-SOH formed in response to oxidative signaling triggers a conformational change and the onset of transcriptional activity with a specific DNA-binding affinity. Cys-199-SOH rapidly reacts with Cys-208-SH to form a disulfide bond. Post-translationally, S-nitrosylation in response to nitrosative signaling triggers a conformational change and the onset of transcriptional activity with a specific DNA-binding affinity. Glutathionylation in response to redox signaling triggers the onset of transcriptional activity with a specific DNA-binding affinity.

With respect to regulation, activated by oxidation of Cys-199 resulting in the alternative formation of cystine, sulfenic acid, S-nitroso- or glutathione-bound cysteine. Functionally, hydrogen peroxide sensor. Activates the expression of a regulon of hydrogen peroxide-inducible genes such as katG, gor, ahpC, ahpF, oxyS (a regulatory RNA), dps, fur and grxA. OxyR expression is negatively autoregulated by binding to a 43 bp region upstream of its own coding sequence. OxyR is inactivated by reduction of its essential disulfide bond by the product of GrxA, itself positively regulated by OxyR. Also has a positive regulatory effect on the production of surface proteins that control the colony morphology and auto-aggregation ability. The polypeptide is Hydrogen peroxide-inducible genes activator (oxyR) (Escherichia coli O157:H7).